A 696-amino-acid polypeptide reads, in one-letter code: Interleukin-1 receptor accessory protein-like 1 (696 aa).

Residues Met1–Ser18 form the signal peptide. Residues Leu19–Thr134 enclose the Ig-like C2-type 1 domain. Residues Leu19–Thr357 lie on the Extracellular side of the membrane. 2 disulfide bridges follow: Cys31–Cys126 and Cys53–Cys118. N-linked (GlcNAc...) asparagine glycans are attached at residues Asn63, Asn122, and Asn138. Disulfide bonds link Cys143–Cys185 and Cys164–Cys216. Ig-like C2-type domains follow at residues Cys143–Thr232 and Pro242–His350. 3 N-linked (GlcNAc...) asparagine glycosylation sites follow: Asn213, Asn264, and Asn331. A disulfide bridge links Cys267 with Cys334. A helical transmembrane segment spans residues Val358–Tyr378. Over Lys379–Trp696 the chain is Cytoplasmic. The TIR domain maps to Lys403–Met559. Glu491 is an active-site residue. Residues Ser549–Gly644 are interaction with NCS1. The interval Gly659 to Ala680 is disordered. The span at Ser666–His676 shows a compositional bias: basic and acidic residues.

The protein belongs to the interleukin-1 receptor family. In terms of assembly, homodimer. Interacts (calcium-independent) with NCS1. Interacts (via the first immunoglobilin domain) with PTPRD (via the second immunoglobilin domain); this interaction is PTPRD-splicing-dependent and induces pre- and post-synaptic differentiation of neurons and is required for IL1RAPL1-mediated synapse formation. Detected at low levels in heart, skeletal muscle, ovary, skin, amygdala, caudate nucleus, corpus callosum, hippocampus, substantia nigra and thalamus. Detected at very low levels in tonsil, prostate, testis, small intestine, placenta, colon and fetal liver.

It is found in the cell membrane. The protein localises to the cytoplasm. Its subcellular location is the cell projection. The protein resides in the axon. It localises to the dendrite. The catalysed reaction is NAD(+) + H2O = ADP-D-ribose + nicotinamide + H(+). May regulate secretion and presynaptic differentiation through inhibition of the activity of N-type voltage-gated calcium channel. May activate the MAP kinase JNK. Plays a role in neurite outgrowth. During dendritic spine formation can bidirectionally induce pre- and post-synaptic differentiation of neurons by trans-synaptically binding to PTPRD. In Homo sapiens (Human), this protein is Interleukin-1 receptor accessory protein-like 1 (IL1RAPL1).